The following is a 337-amino-acid chain: Draxin (337 aa).

The N-terminal stretch at 1–24 is a signal peptide; it reads MLLLALLLLLELSLAGSLGPGSSA. 3 disordered regions span residues 36-67, 107-133, and 234-261; these read GPAL…WTQD, RPYP…KRRK, and WPST…KGEP. 2 stretches are compositionally biased toward basic residues: residues 122–133 and 237–246; these read VKKRGREHKRRK and TRKKEKHRGK. Asn-252 carries an N-linked (GlcNAc...) asparagine glycan.

The protein belongs to the draxin family. In terms of assembly, interacts with LRP6.

It is found in the secreted. In terms of biological role, chemorepulsive axon guidance protein required for the development of spinal cord and forebrain commissures. Acts as a chemorepulsive guidance protein for commissural axons during development. Able to inhibit or repel neurite outgrowth from dorsal spinal cord. Inhibits the stabilization of cytosolic beta-catenin (CTNNB1) via its interaction with LRP6, thereby acting as an antagonist of Wnt signaling pathway. This Bos taurus (Bovine) protein is Draxin.